Consider the following 372-residue polypeptide: Glutamate 5-kinase (372 aa).

Lysine 9 is an ATP binding site. Substrate-binding residues include serine 49, aspartate 136, and asparagine 148. Residues 168 to 169 (TD) and 210 to 216 (TGGMKSK) each bind ATP. The PUA domain maps to 276 to 360 (EGKVFIDDGA…PAIEVIHRDS (85 aa)).

This sequence belongs to the glutamate 5-kinase family.

It localises to the cytoplasm. The catalysed reaction is L-glutamate + ATP = L-glutamyl 5-phosphate + ADP. The protein operates within amino-acid biosynthesis; L-proline biosynthesis; L-glutamate 5-semialdehyde from L-glutamate: step 1/2. Catalyzes the transfer of a phosphate group to glutamate to form L-glutamate 5-phosphate. This chain is Glutamate 5-kinase, found in Oceanobacillus iheyensis (strain DSM 14371 / CIP 107618 / JCM 11309 / KCTC 3954 / HTE831).